A 434-amino-acid chain; its full sequence is GTPase Der (434 aa).

2 EngA-type G domains span residues 3-167 (NIVA…PEIE) and 175-350 (PRFA…ESRS). Residues 9-16 (GRPNVGKS), 56-60 (DTGGY), 119-122 (NKVD), 181-188 (GRPNAGKS), 228-232 (DTAGI), and 293-296 (NKWD) each bind GTP. Residues 351–434 (KKIKTRQFND…VPISIFFRKK (84 aa)) enclose the KH-like domain.

This sequence belongs to the TRAFAC class TrmE-Era-EngA-EngB-Septin-like GTPase superfamily. EngA (Der) GTPase family. Associates with the 50S ribosomal subunit.

GTPase that plays an essential role in the late steps of ribosome biogenesis. The polypeptide is GTPase Der (Christiangramia forsetii (strain DSM 17595 / CGMCC 1.15422 / KT0803) (Gramella forsetii)).